A 133-amino-acid polypeptide reads, in one-letter code: Small ribosomal subunit protein uS8 (133 aa).

The protein belongs to the universal ribosomal protein uS8 family. In terms of assembly, part of the 30S ribosomal subunit. Contacts proteins S5 and S12.

One of the primary rRNA binding proteins, it binds directly to 16S rRNA central domain where it helps coordinate assembly of the platform of the 30S subunit. This is Small ribosomal subunit protein uS8 from Rhodopirellula baltica (strain DSM 10527 / NCIMB 13988 / SH1).